The chain runs to 226 residues: Protein-L-isoaspartate O-methyltransferase (226 aa).

The active site involves Ser-66.

This sequence belongs to the methyltransferase superfamily. L-isoaspartyl/D-aspartyl protein methyltransferase family.

It localises to the cytoplasm. The enzyme catalyses [protein]-L-isoaspartate + S-adenosyl-L-methionine = [protein]-L-isoaspartate alpha-methyl ester + S-adenosyl-L-homocysteine. Its function is as follows. Catalyzes the methyl esterification of L-isoaspartyl residues in peptides and proteins that result from spontaneous decomposition of normal L-aspartyl and L-asparaginyl residues. It plays a role in the repair and/or degradation of damaged proteins. In Methanopyrus kandleri (strain AV19 / DSM 6324 / JCM 9639 / NBRC 100938), this protein is Protein-L-isoaspartate O-methyltransferase.